The following is a 200-amino-acid chain: CASP-like protein 1U2 (200 aa).

The Cytoplasmic segment spans residues M1–N33. The helical transmembrane segment at F34–S54 threads the bilayer. The Extracellular segment spans residues T55–W77. A helical membrane pass occupies residues L78–F98. The Cytoplasmic portion of the chain corresponds to S99–D120. The chain crosses the membrane as a helical span at residues F121–A141. Topologically, residues R142–Q168 are extracellular. Residues G169 to A189 form a helical membrane-spanning segment. Over S190–H200 the chain is Cytoplasmic.

Belongs to the Casparian strip membrane proteins (CASP) family. Homodimer and heterodimers.

It localises to the cell membrane. This chain is CASP-like protein 1U2, found in Physcomitrium patens (Spreading-leaved earth moss).